The sequence spans 298 residues: Ribosomal protein L11 methyltransferase (298 aa).

Threonine 150, glycine 171, aspartate 193, and asparagine 232 together coordinate S-adenosyl-L-methionine.

This sequence belongs to the methyltransferase superfamily. PrmA family.

It is found in the cytoplasm. It catalyses the reaction L-lysyl-[protein] + 3 S-adenosyl-L-methionine = N(6),N(6),N(6)-trimethyl-L-lysyl-[protein] + 3 S-adenosyl-L-homocysteine + 3 H(+). Functionally, methylates ribosomal protein L11. In Chromobacterium violaceum (strain ATCC 12472 / DSM 30191 / JCM 1249 / CCUG 213 / NBRC 12614 / NCIMB 9131 / NCTC 9757 / MK), this protein is Ribosomal protein L11 methyltransferase.